The chain runs to 234 residues: MKITWYGHSAFRIEAGGAKILIDPFLSGNPTWKEGWEGPAEGVTHVLLTHGHGDHLGDTLDILKKTGAMLVANAEISSYYGAQGVEGSRINPGNHGGTVDCGGFTTTFVNALHSSSFTKDGSNIYLGNPHGLVLHFPSDKTVYHMGDTDIFGDMALIEELHQPQIGLVPIGDRYTMGGAVAALACRRFFRFEAVIPCHYGTFPIIDQTAEKFIEGMEGAETKVLTPPPGQEVDL.

This sequence belongs to the UPF0173 family.

This is UPF0173 metal-dependent hydrolase Meso_1362 from Chelativorans sp. (strain BNC1).